The following is a 478-amino-acid chain: Divinyl ether synthase CYP74D3 (478 aa).

Cysteine 432 lines the heme pocket.

Belongs to the cytochrome P450 family. 9-divinyl ether synthase subfamily. As to expression, not detected in leaves, stems or roots of healthy plants.

Its subcellular location is the cytoplasm. It localises to the cytosol. It catalyses the reaction (9S)-hydroperoxy-(10E,12Z)-octadecadienoate = colneleate + H2O. The catalysed reaction is (9S)-hydroperoxy-(10E,12Z,15Z)-octadecatrienoate = colnelenate + H2O. Its function is as follows. Strictly inducible cytochrome P450 involved in the biosynthesis of the anti-fungal toxins colneleate and colnelenate. Can use (9S)-hydroperoxy-(10E,12Z)-octadecadienoate (9-HPOD) and (9S)-hydroperoxy-(10E,12Z,15Z)-octadecatrienoate (9-HPOT) as substrates, but has a very low activity with the corresponding 13-hydroperoxides (13-HPOD and 13-POT). This chain is Divinyl ether synthase CYP74D3, found in Nicotiana tabacum (Common tobacco).